Reading from the N-terminus, the 78-residue chain is MAASKLMQEIHSIGDRLLLKLQRLPQAEPVEILAFSVLVVFTATVVLLLLIACGFCCCQYCWPRRRGRRTQVGPMTPP.

Residues 32-52 (ILAFSVLVVFTATVVLLLLIA) form a helical membrane-spanning segment.

The protein localises to the membrane. This chain is Small integral membrane protein 5 (SMIM5), found in Bos taurus (Bovine).